A 375-amino-acid chain; its full sequence is Probable 1-acyl-sn-glycerol-3-phosphate acyltransferase 5 (375 aa).

A run of 2 helical transmembrane segments spans residues Ile21–Leu41 and Cys57–Asn77. The short motif at His100 to Asp105 is the HXXXXD motif element. Helical transmembrane passes span Tyr312 to Phe332 and Trp337 to Leu357.

It belongs to the 1-acyl-sn-glycerol-3-phosphate acyltransferase family. In terms of tissue distribution, widely expressed at low level.

It localises to the membrane. It carries out the reaction a 1-acyl-sn-glycero-3-phosphate + an acyl-CoA = a 1,2-diacyl-sn-glycero-3-phosphate + CoA. Its pathway is phospholipid metabolism; CDP-diacylglycerol biosynthesis; CDP-diacylglycerol from sn-glycerol 3-phosphate: step 2/3. In terms of biological role, may convert lysophosphatidic acid (LPA) into phosphatidic acid by incorporating acyl moiety at the 2 position. Has no activity when expressed in bacteria or yeast. This Arabidopsis thaliana (Mouse-ear cress) protein is Probable 1-acyl-sn-glycerol-3-phosphate acyltransferase 5 (LPAT5).